A 397-amino-acid chain; its full sequence is Riboflavin biosynthesis protein RibBA (397 aa).

The DHBP synthase stretch occupies residues 1-199; it reads MFHRIEEALE…IEDLIAYRRH (199 aa). Residues 26–27, Asp31, 138–142, and Glu162 contribute to the D-ribulose 5-phosphate site; these read RE and RAGHT. Glu27 contributes to the Mg(2+) binding site. His141 contacts Mg(2+). Positions 200-397 are GTP cyclohydrolase II; that stretch reads HETLVTREVE…VNKLGHLLNL (198 aa). 250-254 serves as a coordination point for GTP; the sequence is RVHSE. 3 residues coordinate Zn(2+): Cys255, Cys266, and Cys268. Residues Gln271, 293–295, and Thr315 contribute to the GTP site; that span reads EGR. Asp327 acts as the Proton acceptor; for GTP cyclohydrolase activity in catalysis. Arg329 acts as the Nucleophile; for GTP cyclohydrolase activity in catalysis. Thr350 and Lys355 together coordinate GTP.

The protein in the N-terminal section; belongs to the DHBP synthase family. In the C-terminal section; belongs to the GTP cyclohydrolase II family. Mg(2+) is required as a cofactor. It depends on Mn(2+) as a cofactor. Requires Zn(2+) as cofactor.

The enzyme catalyses D-ribulose 5-phosphate = (2S)-2-hydroxy-3-oxobutyl phosphate + formate + H(+). It carries out the reaction GTP + 4 H2O = 2,5-diamino-6-hydroxy-4-(5-phosphoribosylamino)-pyrimidine + formate + 2 phosphate + 3 H(+). It functions in the pathway cofactor biosynthesis; riboflavin biosynthesis; 2-hydroxy-3-oxobutyl phosphate from D-ribulose 5-phosphate: step 1/1. The protein operates within cofactor biosynthesis; riboflavin biosynthesis; 5-amino-6-(D-ribitylamino)uracil from GTP: step 1/4. In terms of biological role, catalyzes the conversion of D-ribulose 5-phosphate to formate and 3,4-dihydroxy-2-butanone 4-phosphate. Catalyzes the conversion of GTP to 2,5-diamino-6-ribosylamino-4(3H)-pyrimidinone 5'-phosphate (DARP), formate and pyrophosphate. The protein is Riboflavin biosynthesis protein RibBA of Bacillus cereus (strain B4264).